The sequence spans 66 residues: Large ribosomal subunit protein bL31 (66 aa).

Zn(2+)-binding residues include Cys16, Cys18, Cys36, and Cys39.

It belongs to the bacterial ribosomal protein bL31 family. Type A subfamily. As to quaternary structure, part of the 50S ribosomal subunit. Zn(2+) is required as a cofactor.

Binds the 23S rRNA. The sequence is that of Large ribosomal subunit protein bL31 from Desulforamulus reducens (strain ATCC BAA-1160 / DSM 100696 / MI-1) (Desulfotomaculum reducens).